Consider the following 492-residue polypeptide: MASPTNAPGSQSQTSVSSANHPDPIIHGREILETLVSHLLASKRSLSSISTVWRANEIVTSAKTALEESVILNARTGFLQSGINEQMKVLMKVRNSIECVYNDGQKDFKNVLHTLDAANARLESTMDVLRSTMVDAAFRPAGEEPRSLLDFVDEQGVEGMRDGLKELIRESKETQKEFDTSLLSFDDDLRSLRSGFKNTKVSPPSYSPIPSHLATLEGHAQEMAALLSSLSSHFDLCLNAIRHTEGGYAAVRNAASNPPPGAEPVSVSGVMNTSHDDINEEPLTEHEREEMLFVLEKDAAEVEDVVMELRDRQNEMEIKHDAILDHVSHLTEQFKQTTSIYKILEGVYERLPGYIIAGQDFRARWEDTKAQICGQMDDLEGMRLFYENYLSSYDGLILEVRRRKVAEEKAKTIAKKAMEQISKIYDADMKERHDFKHDVGDYLPVDLYPGINAAAPRWEFRLMEDEEAVNSSPSLERELVEVSSKRDGEAQG.

Residues M1–N20 show a composition bias toward polar residues. Disordered regions lie at residues M1–D23 and V469–G492. Positions L475 to G492 are enriched in basic and acidic residues.

The protein belongs to the ATG17 family.

The protein resides in the cytoplasm. It is found in the preautophagosomal structure membrane. Functionally, autophagy-specific protein that functions in response to autophagy-inducing signals as a scaffold to recruit other ATG proteins to organize pre-autophagosomal structure (PAS) formation. Modulates the timing and magnitude of the autophagy response, such as the size of the sequestering vesicles. Plays particularly a role in pexophagy and nucleophagy. This Sclerotinia sclerotiorum (strain ATCC 18683 / 1980 / Ss-1) (White mold) protein is Autophagy-related protein 17 (atg17).